Consider the following 612-residue polypeptide: Indole-3-acetic acid-amido synthetase GH3.5 (612 aa).

Belongs to the IAA-amido conjugating enzyme family.

Catalyzes the synthesis of indole-3-acetic acid (IAA)-amino acid conjugates, providing a mechanism for the plant to cope with the presence of excess auxin. Strongly reactive with Glu, Gln, Trp, Asp, Ala, Leu, Phe, Gly, Tyr, Met, Ile and Val. Little or no product formation with His, Ser, Thr, Arg, Lys, or Cys. Also active on pyruvic and butyric acid analogs of IAA, PAA and the synthetic auxin naphthaleneacetic acid (NAA). The two chlorinated synthetic auxin herbicides 2,4-D and 3,6-dichloro-o-anisic acid (dicamba) cannot be used as substrates. In Arabidopsis thaliana (Mouse-ear cress), this protein is Indole-3-acetic acid-amido synthetase GH3.5 (GH3.5).